Consider the following 339-residue polypeptide: Lipopolysaccharide glucosyltransferase WaaO (339 aa).

UDP is bound by residues 34-39 (GTDKNF) and 131-132 (DA). Positions 131 and 133 each coordinate Mg(2+). Short sequence motifs (DXD) lie at residues 131–133 (DAD) and 220–222 (DQD). H265 contacts Mg(2+). 265–271 (HYIGPTK) is a UDP binding site.

It belongs to the glycosyltransferase 8 family. Mg(2+) serves as cofactor.

It carries out the reaction UDP-glucose + lipopolysaccharide = UDP + alpha-D-glucosyl-lipopolysaccharide.. The enzyme catalyses alpha-D-Gal-(1-&gt;6)-alpha-D-Glc-(1-&gt;3)-[L-alpha-D-Hep-(1-&gt;7)]-4-O-PO3(2-)-L-alpha-D-Hep-(1-&gt;3)-4-O-PO3(2-)-L-alpha-D-Hep-(1-&gt;5)-[alpha-Kdo-(2-&gt;4)]-alpha-Kdo-(2-&gt;6)-lipid A + UDP-alpha-D-glucose = alpha-D-Glc-(1-&gt;3)-[alpha-D-Gal-(1-&gt;6)]-alpha-D-Glc-(1-&gt;3)-[L-alpha-D-Hep-(1-&gt;7)]-4-O-PO3(2-)-L-alpha-D-Hep-(1-&gt;3)-4-O-PO3(2-)-L-alpha-D-Hep-(1-&gt;5)-[alpha-Kdo-(2-&gt;4)]-alpha-Kdo-(2-&gt;6)-lipid A + UDP + H(+). It functions in the pathway bacterial outer membrane biogenesis; LPS core biosynthesis. Its function is as follows. Glucosyltransferase involved in the biosynthesis of the core oligosaccharide region of lipopolysaccharide (LPS). Catalyzes the addition of a second glucose (glucose II) to the first outer-core glucose (glucose I). In vitro, can add multiple glucose residues to its lipid acceptor. Activity does not require the branched galactose added by WaaB, but it is higher in the presence of this branched galactose. In the absence of a lipid acceptor, can hydrolyze UDP-glucose, but not UDP-galactose. This Escherichia coli (strain K12) protein is Lipopolysaccharide glucosyltransferase WaaO.